A 266-amino-acid chain; its full sequence is Undecaprenyl-diphosphatase (266 aa).

Transmembrane regions (helical) follow at residues methionine 1 to isoleucine 21, glutamine 39 to phenylalanine 59, tryptophan 87 to isoleucine 107, isoleucine 114 to leucine 134, valine 144 to threonine 164, alanine 184 to valine 204, alanine 218 to leucine 238, and methionine 246 to alanine 266.

It belongs to the UppP family.

Its subcellular location is the cell inner membrane. The catalysed reaction is di-trans,octa-cis-undecaprenyl diphosphate + H2O = di-trans,octa-cis-undecaprenyl phosphate + phosphate + H(+). Catalyzes the dephosphorylation of undecaprenyl diphosphate (UPP). Confers resistance to bacitracin. In Shewanella loihica (strain ATCC BAA-1088 / PV-4), this protein is Undecaprenyl-diphosphatase.